The primary structure comprises 433 residues: Glutamate-1-semialdehyde 2,1-aminomutase (433 aa).

An N6-(pyridoxal phosphate)lysine modification is found at Lys273.

This sequence belongs to the class-III pyridoxal-phosphate-dependent aminotransferase family. HemL subfamily. Homodimer. It depends on pyridoxal 5'-phosphate as a cofactor.

Its subcellular location is the cytoplasm. The catalysed reaction is (S)-4-amino-5-oxopentanoate = 5-aminolevulinate. Its pathway is porphyrin-containing compound metabolism; protoporphyrin-IX biosynthesis; 5-aminolevulinate from L-glutamyl-tRNA(Glu): step 2/2. It functions in the pathway porphyrin-containing compound metabolism; chlorophyll biosynthesis. In Synechocystis sp. (strain ATCC 27184 / PCC 6803 / Kazusa), this protein is Glutamate-1-semialdehyde 2,1-aminomutase (hemL).